The primary structure comprises 359 residues: Type-1 angiotensin II receptor (359 aa).

Residues 1 to 25 (MILNSSTEDSIKRIQDDCPKAGRHN) are Extracellular-facing. An N-linked (GlcNAc...) asparagine glycan is attached at N4. 2 residues coordinate angiotensin II: Q15 and D17. 2 disulfides stabilise this stretch: C18–C274 and C101–C180. Residues 26-55 (YIFVMIPTLYSIIFVVGIFGNSLVVIVIYF) traverse the membrane as a helical segment. At 56 to 61 (YMKLKT) the chain is on the cytoplasmic side. The chain crosses the membrane as a helical span at residues 62–89 (VASVFLLNLALADLCFLLTLPLWAVYTA). Residues 90 to 98 (MEYRWPFGN) lie on the Extracellular side of the membrane. A helical transmembrane segment spans residues 99–125 (YLCKIASASVSFNLYASVFLLTCLSID). Over 126–141 (RYLAIVHPMKSRLRRT) the chain is Cytoplasmic. Residues 142 to 165 (MLVAKVTCIIIWLLAGLASLPTII) form a helical membrane-spanning segment. The Extracellular segment spans residues 166–190 (HRNVFFIENTNITVCAFHYESQNST). R167 contacts angiotensin II. N-linked (GlcNAc...) asparagine glycosylation is present at N176. Residues F182, H183, and Y184 each coordinate angiotensin II. N188 carries an N-linked (GlcNAc...) asparagine glycan. A helical transmembrane segment spans residues 191-216 (LPVGLGLTKNILGFLFPFLIILTSYT). Position 199 (K199) interacts with angiotensin II. At 217–239 (LIWKALKKAYEIQKNKPRNDDIF) the chain is on the cytoplasmic side. The helical transmembrane segment at 240–268 (KIIMAIVLFFFFSWVPHQIFTFLDVLIQL) threads the bilayer. Residues 269–278 (GIIHDCKIAD) are Extracellular-facing. Residues 279-304 (IVDTAMPITICLAYFNNCLNPLFYGF) form a helical membrane-spanning segment. Over 305 to 359 (LGKKFKKYFLQLLKYIPPKAKSHSSLSTKMSTLSYRPSENGSSSTKKSAPCTEVE) the chain is Cytoplasmic. The tract at residues 326–359 (SHSSLSTKMSTLSYRPSENGSSSTKKSAPCTEVE) is disordered. The span at 327-351 (HSSLSTKMSTLSYRPSENGSSSTKK) shows a compositional bias: polar residues. C355 carries the S-palmitoyl cysteine lipid modification.

This sequence belongs to the G-protein coupled receptor 1 family. Interacts with MAS1. Interacts with ARRB1. Interacts with FLNA (via filamin repeat 21); increases PKA-mediated phosphorylation of FLNA. In terms of processing, C-terminal Ser or Thr residues may be phosphorylated.

The protein resides in the cell membrane. Functionally, receptor for angiotensin II, a vasoconstricting peptide, which acts as a key regulator of blood pressure and sodium retention by the kidney. The activated receptor in turn couples to G-alpha proteins G(q) (GNAQ, GNA11, GNA14 or GNA15) and thus activates phospholipase C and increases the cytosolic Ca(2+) concentrations, which in turn triggers cellular responses such as stimulation of protein kinase C. The chain is Type-1 angiotensin II receptor (AGTR1) from Sus scrofa (Pig).